The chain runs to 151 residues: Large ribosomal subunit protein uL13 (151 aa).

It belongs to the universal ribosomal protein uL13 family. In terms of assembly, part of the 50S ribosomal subunit.

In terms of biological role, this protein is one of the early assembly proteins of the 50S ribosomal subunit, although it is not seen to bind rRNA by itself. It is important during the early stages of 50S assembly. In Petrotoga mobilis (strain DSM 10674 / SJ95), this protein is Large ribosomal subunit protein uL13.